The primary structure comprises 139 residues: Class I hydrophobin A (139 aa).

The N-terminal stretch at 1–18 (MKFSIAAAVLALASAVVA) is a signal peptide. Disulfide bonds link cysteine 45–cysteine 113, cysteine 53–cysteine 107, cysteine 54–cysteine 88, and cysteine 114–cysteine 133.

This sequence belongs to the fungal hydrophobin family. As to quaternary structure, self-assembles to form functional amyloid fibrils called rodlets. Self-assembly into fibrillar rodlets occurs spontaneously at hydrophobic:hydrophilic interfaces and the rodlets further associate laterally to form amphipathic monolayers.

It localises to the secreted. The protein resides in the cell wall. Aerial growth, conidiation, and dispersal of filamentous fungi in the environment rely upon a capability of their secreting small amphipathic proteins called hydrophobins (HPBs) with low sequence identity. Class I can self-assemble into an outermost layer of rodlet bundles on aerial cell surfaces, conferring cellular hydrophobicity that supports fungal growth, development and dispersal; whereas Class II form highly ordered films at water-air interfaces through intermolecular interactions but contribute nothing to the rodlet structure. HYPA is a class I hydrophobin that contributes to surface hydrophobicity, and prevents recognition by the cellular immune defense system. The chain is Class I hydrophobin A from Arthroderma benhamiae (strain ATCC MYA-4681 / CBS 112371) (Trichophyton mentagrophytes).